The chain runs to 449 residues: Glutamyl-tRNA reductase (449 aa).

Residues 58 to 61 (TCNR), serine 121, 126 to 128 (ETQ), and glutamine 132 contribute to the substrate site. The Nucleophile role is filled by cysteine 59. NADP(+) is bound at residue 203–208 (GLGEMA).

The protein belongs to the glutamyl-tRNA reductase family. Homodimer.

The catalysed reaction is (S)-4-amino-5-oxopentanoate + tRNA(Glu) + NADP(+) = L-glutamyl-tRNA(Glu) + NADPH + H(+). The protein operates within porphyrin-containing compound metabolism; protoporphyrin-IX biosynthesis; 5-aminolevulinate from L-glutamyl-tRNA(Glu): step 1/2. Functionally, catalyzes the NADPH-dependent reduction of glutamyl-tRNA(Glu) to glutamate 1-semialdehyde (GSA). This Helicobacter pylori (strain ATCC 700392 / 26695) (Campylobacter pylori) protein is Glutamyl-tRNA reductase.